The following is a 167-amino-acid chain: Phosphopantetheine adenylyltransferase (167 aa).

Residue Thr-9 participates in substrate binding. ATP contacts are provided by residues Thr-9–Phe-10 and His-17. Substrate is bound by residues Lys-41, Leu-73, and Arg-87. ATP is bound by residues Gly-88 to Arg-90, Glu-98, and Asn-123 to Thr-129.

This sequence belongs to the bacterial CoaD family. Homohexamer. It depends on Mg(2+) as a cofactor.

It is found in the cytoplasm. It carries out the reaction (R)-4'-phosphopantetheine + ATP + H(+) = 3'-dephospho-CoA + diphosphate. The protein operates within cofactor biosynthesis; coenzyme A biosynthesis; CoA from (R)-pantothenate: step 4/5. In terms of biological role, reversibly transfers an adenylyl group from ATP to 4'-phosphopantetheine, yielding dephospho-CoA (dPCoA) and pyrophosphate. This chain is Phosphopantetheine adenylyltransferase, found in Chromohalobacter salexigens (strain ATCC BAA-138 / DSM 3043 / CIP 106854 / NCIMB 13768 / 1H11).